Reading from the N-terminus, the 547-residue chain is Genetic interactor of prohibitins 3, mitochondrial (547 aa).

The transit peptide at 1–22 directs the protein to the mitochondrion; sequence MLRRSLSVVFGRRTIACKSCGI. The CP-type G domain maps to 105-290; sequence EHTLEDVGKG…IHDVPGYRTS (186 aa).

Belongs to the TRAFAC class YlqF/YawG GTPase family. GEP3 subfamily.

It localises to the mitochondrion. Its function is as follows. May be involved in the mitochondrial lipid metabolism. The chain is Genetic interactor of prohibitins 3, mitochondrial (GEP3) from Eremothecium gossypii (strain ATCC 10895 / CBS 109.51 / FGSC 9923 / NRRL Y-1056) (Yeast).